Consider the following 98-residue polypeptide: NADH-ubiquinone oxidoreductase chain 4L (98 aa).

A run of 3 helical transmembrane segments spans residues 1–21 (MSLV…GLLM), 30–50 (LLCL…TILT), and 61–81 (IVLL…LVMV).

The protein belongs to the complex I subunit 4L family. As to quaternary structure, core subunit of respiratory chain NADH dehydrogenase (Complex I) which is composed of 45 different subunits.

The protein localises to the mitochondrion inner membrane. It carries out the reaction a ubiquinone + NADH + 5 H(+)(in) = a ubiquinol + NAD(+) + 4 H(+)(out). Core subunit of the mitochondrial membrane respiratory chain NADH dehydrogenase (Complex I) which catalyzes electron transfer from NADH through the respiratory chain, using ubiquinone as an electron acceptor. Part of the enzyme membrane arm which is embedded in the lipid bilayer and involved in proton translocation. The polypeptide is NADH-ubiquinone oxidoreductase chain 4L (MT-ND4L) (Crocidura russula (Greater white-toothed shrew)).